Here is a 314-residue protein sequence, read N- to C-terminus: Vomeronasal type-1 receptor 98 (314 aa).

Residues 1–19 are Extracellular-facing; the sequence is MNKDTTMYCSAYIRDVFFC. A helical membrane pass occupies residues 20-40; it reads EIGVGISANSCLLLFHIFMFI. Residues 41–49 are Cytoplasmic-facing; sequence RGHRPRLTD. The helical transmembrane segment at 50 to 70 threads the bilayer; the sequence is LPIGLMALIHLLMLLLAAYIA. Residues 71–92 are Extracellular-facing; it reads KDFFMSSGWDDITCKLFIFLHR. A disulfide bridge connects residues C84 and C171. A helical transmembrane segment spans residues 93–113; that stretch reads FFRSLSVCATCMLSVFQTIIL. Residues 114–133 are Cytoplasmic-facing; it reads CPQSSHLAKFKPNSPYHLSC. A helical transmembrane segment spans residues 134–154; the sequence is FFIFMSIFYTSISSHILIAAI. At 155–186 the chain is on the extracellular side; the sequence is ATQNLTSVNLIYITKSCSFLPMSSSMQRTFST. N158 carries N-linked (GlcNAc...) asparagine glycosylation. Residues 187–207 traverse the membrane as a helical segment; sequence LLAFRNAFLIGLMGLSTCYMA. Residues 208-235 are Cytoplasmic-facing; that stretch reads TLLCRHKTRSQRLQNSKLSPKATPEQRA. The chain crosses the membrane as a helical span at residues 236–256; it reads IWTLLMFMSFFLVMSTFDSII. The Extracellular portion of the chain corresponds to 257 to 268; sequence SYSRTIFQGNPS. Residues 269–289 traverse the membrane as a helical segment; the sequence is LYCAQILVAHSYAVVSPMLVL. At 290–314 the chain is on the cytoplasmic side; sequence SNENRLTNPLISMYERIVRLDFLCW.

Belongs to the G-protein coupled receptor 1 family.

Its subcellular location is the cell membrane. Putative pheromone receptor implicated in the regulation of social as well as reproductive behavior. The protein is Vomeronasal type-1 receptor 98 (Vom1r98) of Rattus norvegicus (Rat).